We begin with the raw amino-acid sequence, 192 residues long: Protein GrpE (192 aa).

A disordered region spans residues 1–41; that stretch reads MSKEEFPHEKDLKDEVTPDKAPKKDPKAAPKEEVKENPVEN.

It belongs to the GrpE family. In terms of assembly, homodimer.

It localises to the cytoplasm. Its function is as follows. Participates actively in the response to hyperosmotic and heat shock by preventing the aggregation of stress-denatured proteins, in association with DnaK and GrpE. It is the nucleotide exchange factor for DnaK and may function as a thermosensor. Unfolded proteins bind initially to DnaJ; upon interaction with the DnaJ-bound protein, DnaK hydrolyzes its bound ATP, resulting in the formation of a stable complex. GrpE releases ADP from DnaK; ATP binding to DnaK triggers the release of the substrate protein, thus completing the reaction cycle. Several rounds of ATP-dependent interactions between DnaJ, DnaK and GrpE are required for fully efficient folding. The polypeptide is Protein GrpE (Lactobacillus johnsonii (strain CNCM I-12250 / La1 / NCC 533)).